The chain runs to 500 residues: Probable cytosol aminopeptidase (500 aa).

Lysine 262 and aspartate 267 together coordinate Mn(2+). Lysine 274 is a catalytic residue. Mn(2+) contacts are provided by aspartate 285, aspartate 344, and glutamate 346. The active site involves arginine 348.

It belongs to the peptidase M17 family. Mn(2+) serves as cofactor.

It localises to the cytoplasm. It carries out the reaction Release of an N-terminal amino acid, Xaa-|-Yaa-, in which Xaa is preferably Leu, but may be other amino acids including Pro although not Arg or Lys, and Yaa may be Pro. Amino acid amides and methyl esters are also readily hydrolyzed, but rates on arylamides are exceedingly low.. The enzyme catalyses Release of an N-terminal amino acid, preferentially leucine, but not glutamic or aspartic acids.. Its function is as follows. Presumably involved in the processing and regular turnover of intracellular proteins. Catalyzes the removal of unsubstituted N-terminal amino acids from various peptides. This is Probable cytosol aminopeptidase from Ehrlichia ruminantium (strain Welgevonden).